The primary structure comprises 463 residues: UDP-N-acetylmuramoylalanine--D-glutamate ligase (463 aa).

109 to 115 contributes to the ATP binding site; the sequence is GTDGKST.

The protein belongs to the MurCDEF family.

It localises to the cytoplasm. The enzyme catalyses UDP-N-acetyl-alpha-D-muramoyl-L-alanine + D-glutamate + ATP = UDP-N-acetyl-alpha-D-muramoyl-L-alanyl-D-glutamate + ADP + phosphate + H(+). It functions in the pathway cell wall biogenesis; peptidoglycan biosynthesis. Functionally, cell wall formation. Catalyzes the addition of glutamate to the nucleotide precursor UDP-N-acetylmuramoyl-L-alanine (UMA). The sequence is that of UDP-N-acetylmuramoylalanine--D-glutamate ligase from Leptospira interrogans serogroup Icterohaemorrhagiae serovar Lai (strain 56601).